A 140-amino-acid polypeptide reads, in one-letter code: Protein NrdI (140 aa).

Belongs to the NrdI family.

Functionally, probably involved in ribonucleotide reductase function. In Ruegeria sp. (strain TM1040) (Silicibacter sp.), this protein is Protein NrdI.